The following is a 346-amino-acid chain: MAHLSRWTLSQVTELFEKPLLDLLFEAQQVHRQHFDPRQVQVSTLLSIKTGACPEDCKYCPQSARYKTGLEAERLMEVEQVLDSARKAKAAGSTRFCMGAAWKNPNDRDMPYLEQMVQGVKALGLETCMTLGTLSDDQAQRLGEAGLDYYNHNLDTSPEFYGNIITTRTYQERLDTLEKVREAGIKVCSGGIVGLGETVTDRAGLLLQLANLPTPPESVPINMLVKVKGTPLADNEDVDAFDFIRTIAVARIMMPTSYVRLSAGREQMNEQTQAMCFMAGANSIFYGCKLLTTPNPEEDKDLQLFRKLGLNPQQTAVLAGDNEQQERLEHALRDADNQQYYNAAAV.

The Radical SAM core domain occupies 38–256 (RQVQVSTLLS…IAVARIMMPT (219 aa)). Positions 53, 57, and 60 each coordinate [4Fe-4S] cluster. Positions 97, 128, 188, and 260 each coordinate [2Fe-2S] cluster.

It belongs to the radical SAM superfamily. Biotin synthase family. Homodimer. Requires [4Fe-4S] cluster as cofactor. It depends on [2Fe-2S] cluster as a cofactor.

It carries out the reaction (4R,5S)-dethiobiotin + (sulfur carrier)-SH + 2 reduced [2Fe-2S]-[ferredoxin] + 2 S-adenosyl-L-methionine = (sulfur carrier)-H + biotin + 2 5'-deoxyadenosine + 2 L-methionine + 2 oxidized [2Fe-2S]-[ferredoxin]. Its pathway is cofactor biosynthesis; biotin biosynthesis; biotin from 7,8-diaminononanoate: step 2/2. In terms of biological role, catalyzes the conversion of dethiobiotin (DTB) to biotin by the insertion of a sulfur atom into dethiobiotin via a radical-based mechanism. The chain is Biotin synthase from Cronobacter sakazakii (strain ATCC BAA-894) (Enterobacter sakazakii).